Here is a 417-residue protein sequence, read N- to C-terminus: C6 finger transcription factor traC (417 aa).

The disordered stretch occupies residues M1–N40. Residues R19–D37 are compositionally biased toward low complexity. The segment at residues C44–C73 is a DNA-binding region (zn(2)-C6 fungal-type). Disordered stretches follow at residues Q75–V94 and W104–D128. Over residues P80–V94 the composition is skewed to basic residues. Residues W104–E114 are compositionally biased toward polar residues.

The protein resides in the nucleus. Functionally, C6 finger transcription factor; part of the tra gene cluster that produces terrestric acid. The clavatol biosynthesis cluster cla and the terrestric acid cluster tra are both involved in the production of peniphenones and penilactones. In Penicillium crustosum (Blue mold fungus), this protein is C6 finger transcription factor traC.